Consider the following 201-residue polypeptide: Ras-related protein Rab-1B (201 aa).

The residue at position 1 (Met-1) is an N-acetylmethionine. Residues Ser-17, Gly-18, Val-19, Gly-20, Lys-21, Ser-22, Cys-23, Tyr-33, Thr-34, Glu-35, Ser-36, Ser-39, and Thr-40 each contribute to the GTP site. Ser-22 contributes to the Mg(2+) binding site. Positions 30-45 (DDTYTESYISTIGVDF) match the Switch 1 motif. Mg(2+) contacts are provided by Thr-40 and Asp-63. The interval 64-83 (TAGQERFRTITSSYYRGAHG) is switch 2 region; required for interaction with REP1/CHM. The Switch 2 signature appears at 65–80 (AGQERFRTITSSYYRG). Residues Gly-66, Asn-121, Lys-122, Asp-124, Ser-151, Ala-152, and Lys-153 each contribute to the GTP site. The interval 174–201 (GPGAASGGERPNLKIDSTPVKPASGGCC) is disordered. Residues Cys-200 and Cys-201 are each lipidated (S-geranylgeranyl cysteine). Position 201 is a cysteine methyl ester (Cys-201).

The protein belongs to the small GTPase superfamily. Rab family. As to quaternary structure, interacts with MICAL1 and MICAL2. Interacts (GTP-bound form) with MICALCL, MICAL1 and MILCAL3. Interacts with GDI1; the interaction requires the GDP-bound state. Interacts with CHM/REP1; the interaction requires the GDP-bound form and is necessary for prenylation by GGTase II. Interacts with RabGAP TBC1D20. Interacts (in GDP-bound form) with lipid phosphatase MTMR6 (via GRAM domain); the interaction regulates MTMR6 recruitment to the endoplasmic reticulum-Golgi intermediate compartment. Interacts (in GDP-bound form) with lipid phosphatase MTMR7. Requires Mg(2+) as cofactor. Post-translationally, prenylated; by GGTase II, only after interaction of the substrate with Rab escort protein 1 (REP1).

The protein resides in the cytoplasm. It is found in the membrane. Its subcellular location is the preautophagosomal structure membrane. The protein localises to the perinuclear region. It catalyses the reaction GTP + H2O = GDP + phosphate + H(+). Its activity is regulated as follows. Regulated by guanine nucleotide exchange factors (GEFs) which promote the exchange of bound GDP for free GTP. Regulated by GTPase activating proteins (GAPs) including TBC1D20 which increases the GTP hydrolysis activity. Inhibited by GDP dissociation inhibitors (GDIs). In terms of biological role, the small GTPases Rab are key regulators of intracellular membrane trafficking, from the formation of transport vesicles to their fusion with membranes. Rabs cycle between an inactive GDP-bound form and an active GTP-bound form that is able to recruit to membranes different set of downstream effectors directly responsible for vesicle formation, movement, tethering and fusion. Plays a role in the initial events of the autophagic vacuole development which take place at specialized regions of the endoplasmic reticulum. Regulates vesicular transport between the endoplasmic reticulum and successive Golgi compartments. Required to modulate the compacted morphology of the Golgi. Promotes the recruitment of lipid phosphatase MTMR6 to the endoplasmic reticulum-Golgi intermediate compartment. In Mus musculus (Mouse), this protein is Ras-related protein Rab-1B (Rab1b).